Reading from the N-terminus, the 452-residue chain is tRNA modification GTPase MnmE (452 aa).

Arg-23, Glu-81, and Lys-120 together coordinate (6S)-5-formyl-5,6,7,8-tetrahydrofolate. A TrmE-type G domain is found at 217–373 (GIKTAIIGQT…LVLRINQMYL (157 aa)). A K(+)-binding site is contributed by Asn-227. GTP is bound by residues 227–232 (NVGKSS), 246–252 (TDIPGTT), and 271–274 (DTAG). Ser-231 lines the Mg(2+) pocket. 3 residues coordinate K(+): Thr-246, Ile-248, and Thr-251. A Mg(2+)-binding site is contributed by Thr-252. Residue Lys-452 participates in (6S)-5-formyl-5,6,7,8-tetrahydrofolate binding.

The protein belongs to the TRAFAC class TrmE-Era-EngA-EngB-Septin-like GTPase superfamily. TrmE GTPase family. Homodimer. Heterotetramer of two MnmE and two MnmG subunits. It depends on K(+) as a cofactor.

Its subcellular location is the cytoplasm. Exhibits a very high intrinsic GTPase hydrolysis rate. Involved in the addition of a carboxymethylaminomethyl (cmnm) group at the wobble position (U34) of certain tRNAs, forming tRNA-cmnm(5)s(2)U34. This chain is tRNA modification GTPase MnmE, found in Mycoplasma mycoides subsp. mycoides SC (strain CCUG 32753 / NCTC 10114 / PG1).